A 276-amino-acid polypeptide reads, in one-letter code: Foldase protein PrsA (276 aa).

The first 18 residues, 1–18 (MRKWMIVAAVAAVFGLSA), serve as a signal peptide directing secretion. Cys-19 carries N-palmitoyl cysteine lipidation. Residue Cys-19 is the site of S-diacylglycerol cysteine attachment. The 91-residue stretch at 133–223 (KPKIRASHIL…YGYHIIKVTD (91 aa)) folds into the PpiC domain.

The protein belongs to the PrsA family.

It localises to the cell membrane. The enzyme catalyses [protein]-peptidylproline (omega=180) = [protein]-peptidylproline (omega=0). In terms of biological role, plays a major role in protein secretion by helping the post-translocational extracellular folding of several secreted proteins. In Geobacillus sp. (strain WCH70), this protein is Foldase protein PrsA.